The primary structure comprises 146 residues: 1,4-dihydroxy-2-naphthoyl-CoA hydrolase (146 aa).

Aspartate 19 is a catalytic residue.

This sequence belongs to the 4-hydroxybenzoyl-CoA thioesterase family. DHNA-CoA hydrolase subfamily.

It catalyses the reaction 1,4-dihydroxy-2-naphthoyl-CoA + H2O = 1,4-dihydroxy-2-naphthoate + CoA + H(+). The protein operates within cofactor biosynthesis; phylloquinone biosynthesis. Its pathway is quinol/quinone metabolism; 1,4-dihydroxy-2-naphthoate biosynthesis; 1,4-dihydroxy-2-naphthoate from chorismate: step 7/7. Its function is as follows. Catalyzes the hydrolysis of 1,4-dihydroxy-2-naphthoyl-CoA (DHNA-CoA) to 1,4-dihydroxy-2-naphthoate (DHNA), a reaction involved in phylloquinone (vitamin K1) biosynthesis. This is 1,4-dihydroxy-2-naphthoyl-CoA hydrolase from Thermosynechococcus vestitus (strain NIES-2133 / IAM M-273 / BP-1).